Reading from the N-terminus, the 635-residue chain is Nuclear distribution protein nudE homolog 1 (635 aa).

Positions 14–192 (EKEIKHWKSK…TILRDLVTRS (179 aa)) form a coiled coil. Disordered stretches follow at residues 35-63 (ESSL…NKTI), 200-267 (TMAS…LSRD), 279-328 (VLDD…SARA), 389-504 (SRVV…DHDP), and 516-635 (AAQA…TETF). A compositionally biased stretch (basic and acidic residues) spans 43–56 (ESSKELEQEMEKEL). 2 stretches are compositionally biased toward polar residues: residues 201–224 (MASS…SPIK) and 237–246 (SRQALSSPVT). A compositionally biased stretch (low complexity) spans 280-299 (LDDSPTATTTSAAPTRSSTL). 2 stretches are compositionally biased toward polar residues: residues 314–326 (ASTS…SPSA) and 411–428 (GSPS…TSTP). Residues 516–541 (AAQASVAKRRTSMSGSGMSHSASHGS) show a composition bias toward low complexity. Polar residues-rich tracts occupy residues 547–571 (SGST…SSMT) and 580–619 (SKRT…PAQT). Residues 620–635 (LSRSRSSSLGSETETF) show a composition bias toward low complexity.

The protein belongs to the nudE family. In terms of assembly, self-associates. Interacts with PAC1.

The protein localises to the cytoplasm. It localises to the cytoskeleton. Its function is as follows. Required for nuclear migration. This is Nuclear distribution protein nudE homolog 1 (NDE1) from Mycosarcoma maydis (Corn smut fungus).